A 256-amino-acid polypeptide reads, in one-letter code: Hemin import ATP-binding protein HmuV (256 aa).

The 237-residue stretch at 2–238 (ISAQNLVYSL…QALTMLYGAD (237 aa)) folds into the ABC transporter domain. 34 to 41 (GPNGAGKS) provides a ligand contact to ATP.

It belongs to the ABC transporter superfamily. Heme (hemin) importer (TC 3.A.1.14.5) family. As to quaternary structure, the complex is composed of two ATP-binding proteins (HmuV), two transmembrane proteins (HmuU) and a solute-binding protein (HmuT).

The protein localises to the cell inner membrane. In terms of biological role, part of the ABC transporter complex HmuTUV involved in hemin import. Responsible for energy coupling to the transport system. The chain is Hemin import ATP-binding protein HmuV from Escherichia coli O6:K15:H31 (strain 536 / UPEC).